Consider the following 536-residue polypeptide: SNW domain-containing protein 1 (536 aa).

The interval 1–46 (MALTSFLPAPTQLSQDQLEAEEKARSQRSRQTSLVSSRREPPPYGY) is disordered. Ala-2 is subject to N-acetylalanine. The residue at position 14 (Ser-14) is a Phosphoserine. Lys-23 participates in a covalent cross-link: Glycyl lysine isopeptide (Lys-Gly) (interchain with G-Cter in SUMO2). Positions 59 to 79 (GDGGAFPEIHVAQYPLDMGRK) are interaction with PPIL1. Residues Lys-81, Lys-97, Lys-115, Lys-122, Lys-141, Lys-158, and Lys-170 each participate in a glycyl lysine isopeptide (Lys-Gly) (interchain with G-Cter in SUMO2) cross-link. Positions 174–339 (AQYIRYTPSQ…KARERRAGIK (166 aa)) are SNW. Phosphoserine occurs at positions 182 and 190. Lys-193 is covalently cross-linked (Glycyl lysine isopeptide (Lys-Gly) (interchain with G-Cter in SUMO2)). Residues 209 to 233 (PPRFKINKKIPRGPPSPPAPVMHSP) form a disordered region. Phosphoserine is present on residues Ser-224, Ser-232, and Ser-234. Residues Lys-240, Lys-258, Lys-286, Lys-339, Lys-344, Lys-416, and Lys-441 each participate in a glycyl lysine isopeptide (Lys-Gly) (interchain with G-Cter in SUMO2) cross-link. A disordered region spans residues 311–386 (KMAQKEKEKH…RSKLQRNENR (76 aa)). Ser-446 carries the phosphoserine modification. A Glycyl lysine isopeptide (Lys-Gly) (interchain with G-Cter in SUMO2) cross-link involves residue Lys-452. Basic and acidic residues-rich tracts occupy residues 470-489 (NRFVPDKEFSGSDRRQRGRE) and 503-530 (KFLEEAKQHGGSKRPSDSSRPKEHEHEG). Positions 470-536 (NRFVPDKEFS…EHEGKKRRKE (67 aa)) are disordered. Phosphoserine occurs at positions 479 and 481. Lys-509 participates in a covalent cross-link: Glycyl lysine isopeptide (Lys-Gly) (interchain with G-Cter in SUMO2).

Belongs to the SNW family. As to quaternary structure, identified in the spliceosome C complex. Associates with U4/U6-U5 tri-small nuclear ribonucleoproteins (U4/U6-U5 tri-snRNPs). Component of the minor spliceosome, which splices U12-type introns. Interacts with SKI, SMAD2,SMAD3, RBPJ, RB1, PABPN1, MAGEA1, SIRT1, FOXN3, U2AF2, DAXX and ATP1B4. Interacts with PPIL1. Interacts with VDR and RXRA; preferentially associates with VDR:RXRA heterodimers. Interacts with NCOR2. Interacts with MAML1. Interacts with NOTCH1 NICD; the interaction involves multimerized NOTCH1 NICD. Forms a complex with NOTCH1 NICD and MAML1; the association is dissociated by RBPJ. Associates with positive transcription elongation factor b (P-TEFb). Component of the SNARP complex which consists at least of SNIP1, SNW1, THRAP3, BCLAF1 and PNN. In terms of assembly, (Microbial infection) Interacts with human papillomavirus type-16 (HPV16) E7 protein. (Microbial infection) Interacts with EBV EBNA2; EBNA2 competes with NCOR2 for interaction with SNW1.

The protein resides in the nucleus. Functionally, involved in pre-mRNA splicing as component of the spliceosome. As a component of the minor spliceosome, involved in the splicing of U12-type introns in pre-mRNAs. Required for the specific splicing of CDKN1A pre-mRNA; the function probably involves the recruitment of U2AF2 to the mRNA. May recruit PPIL1 to the spliceosome. May be involved in cyclin-D1/CCND1 mRNA stability through the SNARP complex which associates with both the 3'end of the CCND1 gene and its mRNA. Involved in transcriptional regulation. Modulates TGF-beta-mediated transcription via association with SMAD proteins, MYOD1-mediated transcription via association with PABPN1, RB1-mediated transcriptional repression, and retinoid-X receptor (RXR)- and vitamin D receptor (VDR)-dependent gene transcription in a cell line-specific manner probably involving coactivators NCOA1 and GRIP1. Is involved in NOTCH1-mediated transcriptional activation. Binds to multimerized forms of Notch intracellular domain (NICD) and is proposed to recruit transcriptional coactivators such as MAML1 to form an intermediate preactivation complex which associates with DNA-bound CBF-1/RBPJ to form a transcriptional activation complex by releasing SNW1 and redundant NOTCH1 NICD. (Microbial infection) Is recruited by HIV-1 Tat to Tat:P-TEFb:TAR RNA complexes and is involved in Tat transcription by recruitment of MYC, MEN1 and TRRAP to the HIV promoter. Its function is as follows. (Microbial infection) Proposed to be involved in transcriptional activation by EBV EBNA2 of CBF-1/RBPJ-repressed promoters. In Homo sapiens (Human), this protein is SNW domain-containing protein 1 (SNW1).